We begin with the raw amino-acid sequence, 381 residues long: Succinyl-diaminopimelate desuccinylase (381 aa).

Residue H71 participates in Zn(2+) binding. Residue D73 is part of the active site. Zn(2+) is bound at residue D104. Catalysis depends on E136, which acts as the Proton acceptor. Residues E137, E166, and H351 each contribute to the Zn(2+) site.

Belongs to the peptidase M20A family. DapE subfamily. As to quaternary structure, homodimer. Zn(2+) is required as a cofactor. Co(2+) serves as cofactor.

It carries out the reaction N-succinyl-(2S,6S)-2,6-diaminopimelate + H2O = (2S,6S)-2,6-diaminopimelate + succinate. It participates in amino-acid biosynthesis; L-lysine biosynthesis via DAP pathway; LL-2,6-diaminopimelate from (S)-tetrahydrodipicolinate (succinylase route): step 3/3. Functionally, catalyzes the hydrolysis of N-succinyl-L,L-diaminopimelic acid (SDAP), forming succinate and LL-2,6-diaminopimelate (DAP), an intermediate involved in the bacterial biosynthesis of lysine and meso-diaminopimelic acid, an essential component of bacterial cell walls. The chain is Succinyl-diaminopimelate desuccinylase from Ehrlichia chaffeensis (strain ATCC CRL-10679 / Arkansas).